The sequence spans 349 residues: Peroxisomal acyl-coenzyme A thioester hydrolase 1 (349 aa).

Active-site charge relay system residues include Asp259, Ser282, and Gln333. The Microbody targeting signal signature appears at 347–349 (AKF).

It belongs to the C/M/P thioester hydrolase family.

It localises to the peroxisome. It carries out the reaction hexadecanoyl-CoA + H2O = hexadecanoate + CoA + H(+). Acyl-coenzyme A (acyl-CoA) thioesterases are a group of enzymes that catalyze the hydrolysis of acyl-CoAs to the free fatty acid and coenzyme A (CoASH), providing the potential to regulate intracellular levels of acyl-CoAs, free fatty acids and CoASH. Contributes to growth on fatty acids. The polypeptide is Peroxisomal acyl-coenzyme A thioester hydrolase 1 (TES1) (Saccharomyces cerevisiae (strain ATCC 204508 / S288c) (Baker's yeast)).